A 305-amino-acid polypeptide reads, in one-letter code: GMP synthase [glutamine-hydrolyzing] subunit B (305 aa).

Positions 2 to 185 (VETEEFIAEA…LGLEEVISER (184 aa)) constitute a GMPS ATP-PPase domain. Residue 29-35 (SGGVDSS) participates in ATP binding.

In terms of assembly, heterodimer composed of a glutamine amidotransferase subunit (A) and a GMP-binding subunit (B).

It carries out the reaction XMP + L-glutamine + ATP + H2O = GMP + L-glutamate + AMP + diphosphate + 2 H(+). It functions in the pathway purine metabolism; GMP biosynthesis; GMP from XMP (L-Gln route): step 1/1. In terms of biological role, catalyzes the synthesis of GMP from XMP. In Halorubrum lacusprofundi (strain ATCC 49239 / DSM 5036 / JCM 8891 / ACAM 34), this protein is GMP synthase [glutamine-hydrolyzing] subunit B.